Here is a 245-residue protein sequence, read N- to C-terminus: Uridylate kinase (245 aa).

20–23 (KVSG) is an ATP binding site. A UMP-binding site is contributed by Gly62. 2 residues coordinate ATP: Gly63 and Arg67. Residues Asp81 and 142-149 (IGSPFFTT) contribute to the UMP site. 4 residues coordinate ATP: Thr169, Gln170, Tyr175, and Asp178.

Belongs to the UMP kinase family. As to quaternary structure, homohexamer.

It is found in the cytoplasm. It carries out the reaction UMP + ATP = UDP + ADP. Its pathway is pyrimidine metabolism; CTP biosynthesis via de novo pathway; UDP from UMP (UMPK route): step 1/1. Inhibited by UTP. In terms of biological role, catalyzes the reversible phosphorylation of UMP to UDP. The protein is Uridylate kinase of Anaplasma marginale (strain St. Maries).